The primary structure comprises 406 residues: MAENGKNCDQRRVAMNKEQHNGNFTDPSSVNEKKRREREERQNIVLWRQPLITLQYFSLEILVILKEWTSKLWHRQSIVVSFLLLLAVLIATYYVEGAHQQYVQRIEKQFLLYAYWIGLGILSSVGLGTGLHTFLLYLGPHIASVTLAAYECNSVNFPEPPYPDQIICPDEGGTEGTISLWSIISKVRIEACMWGIGTAIGELPPYFMARAARLSGAEPDDEEYQEFEEMLEHAESAQDFASRAKLAVQKLVQKVGFFGILACASIPNPLFDLAGITCGHFLVPFWTFFGATLIGKAIIKMHIQKIFVIITFSKHIVEQMVAFIGAVPGIGPSLQKPFQEYLEAQRQKLHHKSEMGTPQGENWLSWMFEKLVVVMVCYFILSIINSMAQSYAKRIQQRLNSEEKTK.

Residues 1–20 show a composition bias toward basic and acidic residues; that stretch reads MAENGKNCDQRRVAMNKEQH. Positions 1 to 36 are disordered; it reads MAENGKNCDQRRVAMNKEQHNGNFTDPSSVNEKKRR. At A2 the chain carries N-acetylalanine. At 2 to 43 the chain is on the cytoplasmic side; it reads AENGKNCDQRRVAMNKEQHNGNFTDPSSVNEKKRREREERQN. Residues 21-30 show a composition bias toward polar residues; the sequence is NGNFTDPSSV. Residues 44–64 form a helical membrane-spanning segment; the sequence is IVLWRQPLITLQYFSLEILVI. At 65-77 the chain is on the extracellular side; that stretch reads LKEWTSKLWHRQS. A helical transmembrane segment spans residues 78-98; that stretch reads IVVSFLLLLAVLIATYYVEGA. Topologically, residues 99–109 are cytoplasmic; the sequence is HQQYVQRIEKQ. A helical membrane pass occupies residues 110 to 130; sequence FLLYAYWIGLGILSSVGLGTG. Residues 131–250 lie on the Extracellular side of the membrane; that stretch reads LHTFLLYLGP…ASRAKLAVQK (120 aa). The VTT domain stretch occupies residues 173 to 316; that stretch reads GTEGTISLWS…FVIITFSKHI (144 aa). The helical transmembrane segment at 251–271 threads the bilayer; sequence LVQKVGFFGILACASIPNPLF. Residues 272 to 273 lie on the Cytoplasmic side of the membrane; it reads DL. A helical membrane pass occupies residues 274 to 294; that stretch reads AGITCGHFLVPFWTFFGATLI. Topologically, residues 295–305 are extracellular; it reads GKAIIKMHIQK. Residues 306-326 traverse the membrane as a helical segment; sequence IFVIITFSKHIVEQMVAFIGA. The Cytoplasmic portion of the chain corresponds to 327–363; the sequence is VPGIGPSLQKPFQEYLEAQRQKLHHKSEMGTPQGENW. Residues 364 to 384 traverse the membrane as a helical segment; the sequence is LSWMFEKLVVVMVCYFILSII. The Extracellular portion of the chain corresponds to 385-406; that stretch reads NSMAQSYAKRIQQRLNSEEKTK.

Belongs to the VMP1 family. Interacts with BECN1. Interacts with TJP1. Interacts with TP53INP2. Interacts with TMEM41B. Interacts with ATP2A2, PLN and SLN; competes with PLN and SLN to prevent them from forming an inhibitory complex with ATP2A2. Interacts with ATG2A.

The protein localises to the endoplasmic reticulum-Golgi intermediate compartment membrane. It localises to the cell membrane. It is found in the vacuole membrane. The protein resides in the endoplasmic reticulum membrane. It carries out the reaction a 1,2-diacyl-sn-glycero-3-phospho-L-serine(in) = a 1,2-diacyl-sn-glycero-3-phospho-L-serine(out). The catalysed reaction is cholesterol(in) = cholesterol(out). The enzyme catalyses a 1,2-diacyl-sn-glycero-3-phosphocholine(in) = a 1,2-diacyl-sn-glycero-3-phosphocholine(out). It catalyses the reaction a 1,2-diacyl-sn-glycero-3-phosphoethanolamine(in) = a 1,2-diacyl-sn-glycero-3-phosphoethanolamine(out). Functionally, phospholipid scramblase involved in lipid homeostasis and membrane dynamics processes. Has phospholipid scramblase activity toward cholesterol and phosphatidylserine, as well as phosphatidylethanolamine and phosphatidylcholine. Required for autophagosome formation: participates in early stages of autophagosome biogenesis at the endoplasmic reticulum (ER) membrane by reequilibrating the leaflets of the ER as lipids are extracted by ATG2 (ATG2A or ATG2B) to mediate autophagosome assembly. Regulates ATP2A2 activity to control ER-isolation membrane contacts for autophagosome formation. In addition to autophagy, involved in other processes in which phospholipid scramblase activity is required. Modulates ER contacts with lipid droplets, mitochondria and endosomes. Plays an essential role in formation of cell junctions. Upon stress such as bacterial and viral infection, promotes formation of cytoplasmic vacuoles followed by cell death. Involved in the cytoplasmic vacuolization of acinar cells during the early stage of acute pancreatitis. The sequence is that of Vacuole membrane protein 1 from Pongo abelii (Sumatran orangutan).